Consider the following 192-residue polypeptide: Potassium channel HX13_20290 (192 aa).

Residues methionine 1 to glutamate 24 traverse the membrane as a helical segment. The RxxxFSD motif signature appears at arginine 5–aspartate 11. A topological domain (cytoplasmic) is located at residue leucine 25. The short helix H1 stretch occupies residues lysine 26 to glutamate 29. Over lysine 26 to isoleucine 39 the chain is Extracellular. The short helix H2 stretch occupies residues serine 31–glutamine 37. A helical membrane pass occupies residues leucine 40 to glutamine 65. Over threonine 66 to asparagine 71 the chain is Cytoplasmic. Residues glycine 72–glutamate 93 form a helical membrane-spanning segment. Topologically, residues tryptophan 94 to alanine 101 are extracellular. Residues glutamine 102–isoleucine 126 form a helical membrane-spanning segment. The Cytoplasmic portion of the chain corresponds to isoleucine 127–asparagine 133. A helical transmembrane segment spans residues serine 134 to phenylalanine 162. Topologically, residues tyrosine 163 to proline 164 are extracellular. The chain crosses the membrane as a helical span at residues tyrosine 165–isoleucine 180. Over proline 181–asparagine 192 the chain is Cytoplasmic.

It belongs to the TMEM175 family. As to quaternary structure, homotetramer.

It localises to the membrane. It carries out the reaction K(+)(in) = K(+)(out). Its function is as follows. Potassium channel. The chain is Potassium channel HX13_20290 from Chryseobacterium sp. (strain P1-3).